The following is a 171-amino-acid chain: Translation initiation factor IF-3 (171 aa).

Belongs to the IF-3 family. As to quaternary structure, monomer.

The protein resides in the cytoplasm. Functionally, IF-3 binds to the 30S ribosomal subunit and shifts the equilibrium between 70S ribosomes and their 50S and 30S subunits in favor of the free subunits, thus enhancing the availability of 30S subunits on which protein synthesis initiation begins. This Listeria innocua serovar 6a (strain ATCC BAA-680 / CLIP 11262) protein is Translation initiation factor IF-3.